Reading from the N-terminus, the 100-residue chain is Replication restart protein PriB (100 aa).

One can recognise an SSB domain in the interval 1–99 (MGFNNLVSLA…LRIQNIKEYK (99 aa)).

This sequence belongs to the PriB family. As to quaternary structure, homodimer. Interacts with PriA and DnaT. Component of the replication restart primosome. Primosome assembly occurs via a 'hand-off' mechanism. PriA binds to replication forks, subsequently PriB then DnaT bind; DnaT then displaces ssDNA to generate the helicase loading substrate.

In terms of biological role, involved in the restart of stalled replication forks, which reloads the replicative helicase on sites other than the origin of replication; the PriA-PriB pathway is the major replication restart pathway. During primosome assembly it facilitates complex formation between PriA and DnaT on DNA; stabilizes PriA on DNA. Stimulates the DNA unwinding activity of PriA helicase. The protein is Replication restart protein PriB of Neisseria meningitidis serogroup C (strain 053442).